A 706-amino-acid polypeptide reads, in one-letter code: Polyribonucleotide nucleotidyltransferase (706 aa).

Mg(2+) is bound by residues Asp486 and Asp492. Residues Pro553–Ile612 form the KH domain. One can recognise an S1 motif domain in the interval Asn622–Lys690.

This sequence belongs to the polyribonucleotide nucleotidyltransferase family. Component of the RNA degradosome, which is a multiprotein complex involved in RNA processing and mRNA degradation. Mg(2+) is required as a cofactor.

Its subcellular location is the cytoplasm. It catalyses the reaction RNA(n+1) + phosphate = RNA(n) + a ribonucleoside 5'-diphosphate. Its function is as follows. Involved in mRNA degradation. Catalyzes the phosphorolysis of single-stranded polyribonucleotides processively in the 3'- to 5'-direction. This is Polyribonucleotide nucleotidyltransferase from Yersinia enterocolitica serotype O:8 / biotype 1B (strain NCTC 13174 / 8081).